Here is a 601-residue protein sequence, read N- to C-terminus: Elongation factor 4 (601 aa).

The tr-type G domain occupies 5–187; the sequence is IRKKNFCIIA…AICKYVPSPK (183 aa). Residues 17 to 22 and 134 to 137 each bind GTP; these read DHGKST and NKID.

It belongs to the TRAFAC class translation factor GTPase superfamily. Classic translation factor GTPase family. LepA subfamily.

The protein localises to the cell inner membrane. The catalysed reaction is GTP + H2O = GDP + phosphate + H(+). In terms of biological role, required for accurate and efficient protein synthesis under certain stress conditions. May act as a fidelity factor of the translation reaction, by catalyzing a one-codon backward translocation of tRNAs on improperly translocated ribosomes. Back-translocation proceeds from a post-translocation (POST) complex to a pre-translocation (PRE) complex, thus giving elongation factor G a second chance to translocate the tRNAs correctly. Binds to ribosomes in a GTP-dependent manner. The protein is Elongation factor 4 of Borreliella afzelii (strain PKo) (Borrelia afzelii).